The sequence spans 422 residues: UDP-N-acetylglucosamine 1-carboxyvinyltransferase (422 aa).

Residue Lys-22–Asn-23 participates in phosphoenolpyruvate binding. UDP-N-acetyl-alpha-D-glucosamine is bound at residue Arg-93. Cys-117 functions as the Proton donor in the catalytic mechanism. 2-(S-cysteinyl)pyruvic acid O-phosphothioketal is present on Cys-117. Residues Arg-122 to Leu-126, Asp-308, and Leu-330 contribute to the UDP-N-acetyl-alpha-D-glucosamine site.

It belongs to the EPSP synthase family. MurA subfamily.

Its subcellular location is the cytoplasm. The catalysed reaction is phosphoenolpyruvate + UDP-N-acetyl-alpha-D-glucosamine = UDP-N-acetyl-3-O-(1-carboxyvinyl)-alpha-D-glucosamine + phosphate. The protein operates within cell wall biogenesis; peptidoglycan biosynthesis. Functionally, cell wall formation. Adds enolpyruvyl to UDP-N-acetylglucosamine. The protein is UDP-N-acetylglucosamine 1-carboxyvinyltransferase of Helicobacter acinonychis (strain Sheeba).